The following is a 398-amino-acid chain: 1-deoxy-D-xylulose 5-phosphate reductoisomerase (398 aa).

Thr10, Gly11, Ser12, Ile13, Lys37, Asn38, and Asn124 together coordinate NADPH. Residue Lys125 coordinates 1-deoxy-D-xylulose 5-phosphate. Glu126 is a binding site for NADPH. Asp150 contributes to the Mn(2+) binding site. Residues Ser151, Glu152, Ser186, and His209 each coordinate 1-deoxy-D-xylulose 5-phosphate. Glu152 contributes to the Mn(2+) binding site. Gly215 is an NADPH binding site. 1-deoxy-D-xylulose 5-phosphate contacts are provided by Ser222, Asn227, Lys228, and Glu231. Residue Glu231 coordinates Mn(2+).

Belongs to the DXR family. Homodimer. It depends on Mg(2+) as a cofactor. Mn(2+) serves as cofactor.

It catalyses the reaction 2-C-methyl-D-erythritol 4-phosphate + NADP(+) = 1-deoxy-D-xylulose 5-phosphate + NADPH + H(+). Its pathway is isoprenoid biosynthesis; isopentenyl diphosphate biosynthesis via DXP pathway; isopentenyl diphosphate from 1-deoxy-D-xylulose 5-phosphate: step 1/6. In terms of biological role, catalyzes the NADPH-dependent rearrangement and reduction of 1-deoxy-D-xylulose-5-phosphate (DXP) to 2-C-methyl-D-erythritol 4-phosphate (MEP). In Buchnera aphidicola subsp. Acyrthosiphon pisum (strain APS) (Acyrthosiphon pisum symbiotic bacterium), this protein is 1-deoxy-D-xylulose 5-phosphate reductoisomerase.